We begin with the raw amino-acid sequence, 292 residues long: 4-hydroxy-tetrahydrodipicolinate synthase (292 aa).

Residue Thr48 coordinates pyruvate. Tyr136 functions as the Proton donor/acceptor in the catalytic mechanism. Lys164 serves as the catalytic Schiff-base intermediate with substrate. Residue Ile204 participates in pyruvate binding.

Belongs to the DapA family. In terms of assembly, homotetramer; dimer of dimers.

It is found in the cytoplasm. It carries out the reaction L-aspartate 4-semialdehyde + pyruvate = (2S,4S)-4-hydroxy-2,3,4,5-tetrahydrodipicolinate + H2O + H(+). Its pathway is amino-acid biosynthesis; L-lysine biosynthesis via DAP pathway; (S)-tetrahydrodipicolinate from L-aspartate: step 3/4. In terms of biological role, catalyzes the condensation of (S)-aspartate-beta-semialdehyde [(S)-ASA] and pyruvate to 4-hydroxy-tetrahydrodipicolinate (HTPA). The protein is 4-hydroxy-tetrahydrodipicolinate synthase of Acetivibrio thermocellus (strain ATCC 27405 / DSM 1237 / JCM 9322 / NBRC 103400 / NCIMB 10682 / NRRL B-4536 / VPI 7372) (Clostridium thermocellum).